The primary structure comprises 457 residues: Aromatic amino acid transport protein AroP (457 aa).

The Cytoplasmic segment spans residues 1–19; that stretch reads MMEGQQHGEQLKRGLKNRH. A helical transmembrane segment spans residues 20 to 40; sequence IQLIALGGAIGTGLFLGSASV. At 41–42 the chain is on the periplasmic side; it reads IQ. Residues 43 to 63 traverse the membrane as a helical segment; that stretch reads SAGPGIILGYAIAGFIAFLIM. Over 64-86 the chain is Cytoplasmic; the sequence is RQLGEMVVEEPVAGSFSHFAYKY. Residues 87–107 traverse the membrane as a helical segment; the sequence is WGSFAGFASGWNYWVLYVLVA. The Periplasmic portion of the chain corresponds to 108 to 117; sequence MAELTAVGKY. The helical transmembrane segment at 118–138 threads the bilayer; sequence IQFWYPEIPTWVSAAVFFVVI. Over 139-155 the chain is Cytoplasmic; the sequence is NAINLTNVTVFGEMEFW. Residues 156-176 form a helical membrane-spanning segment; the sequence is FAIIKVIAVVAMIIFGGWLLF. The Periplasmic segment spans residues 177-201; sequence SGNGGPQASVSNLWDQGGFLPHGFT. The chain crosses the membrane as a helical span at residues 202–222; sequence GLVMMMAIIMFSFGGLELVGI. At 223–240 the chain is on the cytoplasmic side; sequence TAAEADNPEQSIPKATNQ. Residues 241 to 261 traverse the membrane as a helical segment; the sequence is VIYRILIFYIGSLAVLLSLMP. At 262 to 271 the chain is on the periplasmic side; the sequence is WTRVTADTSP. The chain crosses the membrane as a helical span at residues 272-292; the sequence is FVLIFHELGDTFVANALNIVV. Topologically, residues 293–333 are cytoplasmic; the sequence is LTAALSVYNSCVYCNSRMLFGLAQQGNAPKALASVDKRGVP. The helical transmembrane segment at 334–354 threads the bilayer; it reads VNTILVSALVTALCVLINYLA. At 355 to 358 the chain is on the periplasmic side; that stretch reads PESA. A helical membrane pass occupies residues 359-379; it reads FGLLMALVVSALVINWAMISL. Over 380-407 the chain is Cytoplasmic; the sequence is AHMKFRRAKQEQGVVTRFPALLYPLGNW. The helical transmembrane segment at 408–428 threads the bilayer; that stretch reads ICLLFMAVVLVIMLMTPGMAI. Residue Ser429 is a topological domain, periplasmic. The helical transmembrane segment at 430 to 450 threads the bilayer; sequence VYLIPVWLVVLGIGYLFKEKT. At 451-457 the chain is on the cytoplasmic side; the sequence is AKAVKAH.

It belongs to the amino acid-polyamine-organocation (APC) superfamily. Amino acid transporter (AAT) (TC 2.A.3.1) family.

Its subcellular location is the cell inner membrane. It carries out the reaction L-phenylalanine(in) + H(+)(in) = L-phenylalanine(out) + H(+)(out). The enzyme catalyses L-tryptophan(in) + H(+)(in) = L-tryptophan(out) + H(+)(out). The catalysed reaction is L-tyrosine(in) + H(+)(in) = L-tyrosine(out) + H(+)(out). In terms of biological role, permease that is involved in the active transport across the cytoplasmic membrane of all three aromatic amino acids, phenylalanine, tyrosine and tryptophan. This chain is Aromatic amino acid transport protein AroP (aroP), found in Escherichia coli O157:H7.